We begin with the raw amino-acid sequence, 150 residues long: Histone H2B.2 (150 aa).

Composition is skewed to basic and acidic residues over residues methionine 1–glutamate 21 and glutamate 33–lysine 49. Residues methionine 1 to lysine 58 are disordered. Lysine 7 and lysine 34 each carry N6-acetyllysine. A Glycyl lysine isopeptide (Lys-Gly) (interchain with G-Cter in ubiquitin) cross-link involves residue lysine 146.

Belongs to the histone H2B family. The nucleosome is a histone octamer containing two molecules each of H2A, H2B, H3 and H4 assembled in one H3-H4 heterotetramer and two H2A-H2B heterodimers. The octamer wraps approximately 147 bp of DNA. Post-translationally, can be acetylated to form H2BK6ac and H2BK33ac. Monoubiquitinated by BRE1 to form H2BK143ub1 and deubiquitinated by UBP26. Required for heterochromatic histone H3 di- and trimethylation at H3K4me. May give a specific tag for epigenetic transcriptional activation.

It localises to the nucleus. Its subcellular location is the chromosome. In terms of biological role, core component of nucleosome. Nucleosomes wrap and compact DNA into chromatin, limiting DNA accessibility to the cellular machineries which require DNA as a template. Histones thereby play a central role in transcription regulation, DNA repair, DNA replication and chromosomal stability. DNA accessibility is regulated via a complex set of post-translational modifications of histones, also called histone code, and nucleosome remodeling. The sequence is that of Histone H2B.2 (H2B.2) from Oryza sativa subsp. indica (Rice).